We begin with the raw amino-acid sequence, 413 residues long: Tyrosine--tRNA ligase (413 aa).

Tyrosine 34 contributes to the L-tyrosine binding site. Positions 39–48 match the 'HIGH' region motif; it reads CTAQSLHVGN. The L-tyrosine site is built by tyrosine 171 and glutamine 175. The 'KMSKS' region signature appears at 231–235; the sequence is KMGKT. Lysine 234 is an ATP binding site. The region spanning 346-411 is the S4 RNA-binding domain; that stretch reads IPITELLVTI…GKKCHILVKI (66 aa).

It belongs to the class-I aminoacyl-tRNA synthetase family. TyrS type 1 subfamily. As to quaternary structure, homodimer.

It is found in the cytoplasm. The catalysed reaction is tRNA(Tyr) + L-tyrosine + ATP = L-tyrosyl-tRNA(Tyr) + AMP + diphosphate + H(+). Functionally, catalyzes the attachment of tyrosine to tRNA(Tyr) in a two-step reaction: tyrosine is first activated by ATP to form Tyr-AMP and then transferred to the acceptor end of tRNA(Tyr). The protein is Tyrosine--tRNA ligase of Orientia tsutsugamushi (strain Boryong) (Rickettsia tsutsugamushi).